A 110-amino-acid polypeptide reads, in one-letter code: UPF0339 protein PA0329 (110 aa).

2 repeat units span residues 10–58 (AKDG…AFEV) and 61–109 (ANNG…LSDE). Positions 91 to 110 (EAGVQSVKRATPEAGLSDES) are disordered.

This sequence belongs to the UPF0339 family. Duplicated subfamily.

In Pseudomonas aeruginosa (strain ATCC 15692 / DSM 22644 / CIP 104116 / JCM 14847 / LMG 12228 / 1C / PRS 101 / PAO1), this protein is UPF0339 protein PA0329.